A 64-amino-acid polypeptide reads, in one-letter code: MSESTKETIEVLYEIGTLLGTELDKTTLSLCISLCENNVHPEAIAQIIREIRMAQEQTVDTEPS.

This sequence belongs to the MOZART1 family. Part of the gamma-tubulin complex. Interacts directly with alp6/GPC3.

The protein localises to the cytoplasm. The protein resides in the cytoskeleton. Its subcellular location is the microtubule organizing center. It localises to the spindle pole body. In terms of biological role, required for gamma-tubulin complex recruitment to the microtubule organizing center (MTOC). The sequence is that of Mitotic-spindle organizing protein 1 (mzt1) from Schizosaccharomyces pombe (strain 972 / ATCC 24843) (Fission yeast).